Consider the following 258-residue polypeptide: Steroid 5-alpha-reductase DET2 (258 aa).

Transmembrane regions (helical) follow at residues 8–28 (FHYCLLTLYIIALPTWISLYF), 49–69 (LAWFLMESPTLWLTFFLFPSG), 77–97 (SFLLISPFLFHYFNRTVLYPL), 109–129 (FPVSVAFMAFGFNLLNGYLQA), 144–164 (LFWWRFLAGLLIFVVGMWVNV), and 201–221 (IMEWFGWAVMTWSWVGFGFFL).

It belongs to the steroid 5-alpha reductase family. In terms of tissue distribution, accumulates in fibers (seed trichomes) during both their initiation and elongation phases. Also present in roots, hypocotyls, leaves, flowers and ovules, and barely in cotyledons.

The protein localises to the membrane. The catalysed reaction is a 3-oxo-5alpha-steroid + NADP(+) = a 3-oxo-Delta(4)-steroid + NADPH + H(+). The protein operates within plant hormone biosynthesis; brassinosteroid biosynthesis. Its function is as follows. Involved in a reduction step in the biosynthesis of the plant steroid, brassinolide (BL). Promotes cotton fibers (seed trichomes) initiation and elongation. This chain is Steroid 5-alpha-reductase DET2, found in Gossypium hirsutum (Upland cotton).